The following is a 641-amino-acid chain: UPF0329 protein ECU11_0030 (641 aa).

Residues 358-387 (RQRKREEETERSVKELVGDEEKAKSKEEKA) show a composition bias toward basic and acidic residues. Residues 358–444 (RQRKREEETE…KGGKKKSKGG (87 aa)) form a disordered region. Residues 435 to 444 (KGGKKKSKGG) are compositionally biased toward basic residues.

Belongs to the UPF0329 family.

In Encephalitozoon cuniculi (strain GB-M1) (Microsporidian parasite), this protein is UPF0329 protein ECU11_0030.